The sequence spans 476 residues: Siroheme synthase (476 aa).

Residues 1 to 204 (MDYFPVFLNI…GKDQAAQDYL (204 aa)) are precorrin-2 dehydrogenase /sirohydrochlorin ferrochelatase. NAD(+) is bound by residues 22-23 (SV) and 43-44 (PT). Ser129 is modified (phosphoserine). Residues 218–476 (GEVYLVGAGP…GNTPGYSKHP (259 aa)) form a uroporphyrinogen-III C-methyltransferase region. S-adenosyl-L-methionine is bound at residue Pro227. The active-site Proton acceptor is Asp250. The active-site Proton donor is the Lys272. S-adenosyl-L-methionine is bound by residues 303–305 (GGD), Ile308, 333–334 (TA), Met385, and Gly414.

The protein in the N-terminal section; belongs to the precorrin-2 dehydrogenase / sirohydrochlorin ferrochelatase family. In the C-terminal section; belongs to the precorrin methyltransferase family.

The catalysed reaction is uroporphyrinogen III + 2 S-adenosyl-L-methionine = precorrin-2 + 2 S-adenosyl-L-homocysteine + H(+). The enzyme catalyses precorrin-2 + NAD(+) = sirohydrochlorin + NADH + 2 H(+). It catalyses the reaction siroheme + 2 H(+) = sirohydrochlorin + Fe(2+). The protein operates within cofactor biosynthesis; adenosylcobalamin biosynthesis; precorrin-2 from uroporphyrinogen III: step 1/1. It functions in the pathway cofactor biosynthesis; adenosylcobalamin biosynthesis; sirohydrochlorin from precorrin-2: step 1/1. It participates in porphyrin-containing compound metabolism; siroheme biosynthesis; precorrin-2 from uroporphyrinogen III: step 1/1. Its pathway is porphyrin-containing compound metabolism; siroheme biosynthesis; siroheme from sirohydrochlorin: step 1/1. The protein operates within porphyrin-containing compound metabolism; siroheme biosynthesis; sirohydrochlorin from precorrin-2: step 1/1. Its function is as follows. Multifunctional enzyme that catalyzes the SAM-dependent methylations of uroporphyrinogen III at position C-2 and C-7 to form precorrin-2 via precorrin-1. Then it catalyzes the NAD-dependent ring dehydrogenation of precorrin-2 to yield sirohydrochlorin. Finally, it catalyzes the ferrochelation of sirohydrochlorin to yield siroheme. This Nitrosomonas eutropha (strain DSM 101675 / C91 / Nm57) protein is Siroheme synthase.